A 987-amino-acid polypeptide reads, in one-letter code: Collagen alpha-1(I) chain (987 aa).

A disordered region spans residues 1–987; it reads GPMGPSGPRG…PGPPGPPGPP (987 aa). The segment covering 20–39 has biased composition (low complexity); the sequence is PQGFQGPPGEPGEPGASGPM. A compositionally biased stretch (basic and acidic residues) spans 51–65; it reads NGDDGEAGKPGRPGE. Phosphoserine is present on S93. Low complexity-rich tracts occupy residues 101-117 and 141-153; these read DAGPAGPKGEPGSPGEN and AGARGNDGATGAA. Residues 155 to 167 are compositionally biased toward pro residues; it reads PPGPTGPAGPPGF. Low complexity-rich tracts occupy residues 201 to 251, 354 to 380, 389 to 408, 422 to 444, 516 to 543, 602 to 614, 627 to 654, 662 to 677, 686 to 696, and 737 to 752; these read AGAA…APGP, KGITGSPGSPGPDGKTGPPGPAGQDGR, ARGQAGVMGFPGPKGAAGEP, AVGAPGKDGEAGAPGATGPAGPA, NGAPGNDGAKGDAGAPGAPGSQGAPGIQ, PNGPAGPTGARGA, AGFAGPPGADGQPGAKGEPGDAGAKGDA, PTGAPGPIGNVGAPGP, ATGFPGAAGRV, and SGEKGSPGADGPAGAP. Residues 756 to 765 show a composition bias toward gly residues; the sequence is GPQGIGGQRG. Positions 799-809 are enriched in pro residues; sequence PPGPMGPPGIA. The segment covering 811-826 has biased composition (low complexity); sequence PPGESGREGSPGAEGS. Over residues 845 to 860 the composition is skewed to pro residues; the sequence is AGPPGAPGAPGAPGPV. The segment covering 896-907 has biased composition (basic and acidic residues); sequence RGDKGETGEQGD. The segment covering 923-956 has biased composition (low complexity); sequence PGEQGPSGASGPAGPRGPPGSAGAPGKDGINGIP. A compositionally biased stretch (pro residues) spans 972–987; the sequence is VGPPGPPGPPGPPGPP.

This sequence belongs to the fibrillar collagen family. As to quaternary structure, trimers of one alpha 2(I) and two alpha 1(I) chains. In terms of processing, prolines at the third position of the tripeptide repeating unit (G-X-Y) are hydroxylated in some or all of the chains. Forms the fibrils of tendon, ligaments and bones. In bones, the fibrils are mineralized with calcium hydroxyapatite.

It is found in the secreted. Its subcellular location is the extracellular space. The protein localises to the extracellular matrix. Type I collagen is a member of group I collagen (fibrillar forming collagen). This chain is Collagen alpha-1(I) chain, found in Orycteropus afer (Aardvark).